A 318-amino-acid chain; its full sequence is MEYIKSNKVVLIGDGAVGSSYAFALVAQGVADELVIIDLDEDKVKGDVMDLNHAAPYGGSPVKIKAGSYKACHNADLVVITAGAAQKPGETRLDLIEKNTKIFKSIVSEVMASGFNGIFLVATNPVDVLTYVTQQVSGLPKEKVIGSGTILDTARFKYELAEEFGVSDRSVHGQIIGEHGDSELAVWSQANIAGQPLYQLLIDDPEKQHRIEEIFVNTRDAAYDIIQAKGATYYGIAMGLVHITKAILNNQNVVLTVSSRLEGEYGQEDVYIGVPTKINRQGAVEVFEIPLNDEEKTLFTRSVGILKEMQNKISHLIA.

NAD(+) contacts are provided by residues Val-17, Asp-38, Lys-43, Tyr-69, and 83–84 (GA). Residues Gln-86 and Arg-92 each coordinate substrate. NAD(+) contacts are provided by residues Ser-105, 122 to 124 (ATN), and Ser-147. 124–127 (NPVD) is a substrate binding site. 152 to 155 (DTAR) is a binding site for substrate. 2 residues coordinate beta-D-fructose 1,6-bisphosphate: Lys-157 and His-172. The Proton acceptor role is filled by His-179. The residue at position 223 (Tyr-223) is a Phosphotyrosine. Thr-232 is a substrate binding site.

Belongs to the LDH/MDH superfamily. LDH family. In terms of assembly, homotetramer.

It localises to the cytoplasm. The catalysed reaction is (S)-lactate + NAD(+) = pyruvate + NADH + H(+). The protein operates within fermentation; pyruvate fermentation to lactate; (S)-lactate from pyruvate: step 1/1. With respect to regulation, allosterically activated by fructose 1,6-bisphosphate (FBP). In terms of biological role, catalyzes the conversion of lactate to pyruvate. This Staphylococcus saprophyticus subsp. saprophyticus (strain ATCC 15305 / DSM 20229 / NCIMB 8711 / NCTC 7292 / S-41) protein is L-lactate dehydrogenase.